Reading from the N-terminus, the 508-residue chain is Maturase K (508 aa).

Belongs to the intron maturase 2 family. MatK subfamily.

It is found in the plastid. It localises to the chloroplast. Usually encoded in the trnK tRNA gene intron. Probably assists in splicing its own and other chloroplast group II introns. The polypeptide is Maturase K (Ranunculus glacialis (Glacier buttercup)).